The primary structure comprises 195 residues: Cysteine/O-acetylserine efflux protein (195 aa).

Over 1–9 (MTPMLLSAF) the chain is Periplasmic. A helical membrane pass occupies residues 10–32 (WTYTLITALTPGPNNILALSAAT). Over 33–46 (AHGFRQSIRVLAGM) the chain is Cytoplasmic. The chain crosses the membrane as a helical span at residues 47–67 (SLGFLVVMLLCAGIAFSLAVI). Topologically, residues 68 to 69 (DP) are periplasmic. A helical membrane pass occupies residues 70 to 90 (AIIHLLSWVGAAYILWLAWKI). Topologically, residues 91-104 (ATSPAADENARPKP) are cytoplasmic. A helical transmembrane segment spans residues 105-125 (VGFWVSFGLQFVNVKIILYGI). At 126–141 (TALSTFVLPQTQALNW) the chain is on the periplasmic side. Residues 142 to 162 (VIGVSILLALIGTFGNVCWAL) traverse the membrane as a helical segment. Topologically, residues 163–176 (AGHLFQRAFRHYGR) are cytoplasmic. Residues 177-194 (QLNIILALLLVYCAVRIF) traverse the membrane as a helical segment. Residue tyrosine 195 is a topological domain, periplasmic.

This sequence belongs to the Rht family.

The protein localises to the cell inner membrane. It carries out the reaction O-acetyl-L-serine(in) = O-acetyl-L-serine(out). It catalyses the reaction L-cysteine(in) = L-cysteine(out). Functionally, exporter of O-acetylserine (OAS) and cysteine. The polypeptide is Cysteine/O-acetylserine efflux protein (eamB) (Salmonella choleraesuis (strain SC-B67)).